A 404-amino-acid chain; its full sequence is Argininosuccinate synthase (404 aa).

7–15 (AYSGGLDTS) is a binding site for ATP. L-citrulline-binding residues include Y85 and S90. An ATP-binding site is contributed by G115. Residues T117, N121, and D122 each coordinate L-aspartate. N121 contacts L-citrulline. The L-citrulline site is built by R125, S178, S187, E264, and Y276.

It belongs to the argininosuccinate synthase family. Type 1 subfamily. In terms of assembly, homotetramer.

Its subcellular location is the cytoplasm. It catalyses the reaction L-citrulline + L-aspartate + ATP = 2-(N(omega)-L-arginino)succinate + AMP + diphosphate + H(+). The protein operates within amino-acid biosynthesis; L-arginine biosynthesis; L-arginine from L-ornithine and carbamoyl phosphate: step 2/3. The protein is Argininosuccinate synthase of Rhodopirellula baltica (strain DSM 10527 / NCIMB 13988 / SH1).